The sequence spans 79 residues: Acyl carrier protein (79 aa).

The region spanning S2–T77 is the Carrier domain. S37 carries the O-(pantetheine 4'-phosphoryl)serine modification.

The protein belongs to the acyl carrier protein (ACP) family. In terms of processing, 4'-phosphopantetheine is transferred from CoA to a specific serine of apo-ACP by AcpS. This modification is essential for activity because fatty acids are bound in thioester linkage to the sulfhydryl of the prosthetic group.

The protein resides in the cytoplasm. It functions in the pathway lipid metabolism; fatty acid biosynthesis. In terms of biological role, carrier of the growing fatty acid chain in fatty acid biosynthesis. This Rhodospirillum centenum (strain ATCC 51521 / SW) protein is Acyl carrier protein.